Consider the following 1101-residue polypeptide: Coiled-coil domain-containing protein 150 (1101 aa).

Coiled-coil stretches lie at residues 106–299 (RLES…DLTS), 398–680 (AAHA…KEDN), 712–940 (DSEI…NYEQ), and 970–1033 (VRNK…EAHR). Residues 1055–1071 (SGEDRWQEKDQDVKHDV) show a composition bias toward basic and acidic residues. Residues 1055–1101 (SGEDRWQEKDQDVKHDVMSNQSVLHRWERKQNLRPMPKKYHSEVQRK) are disordered.

This Homo sapiens (Human) protein is Coiled-coil domain-containing protein 150 (CCDC150).